Here is a 122-residue protein sequence, read N- to C-terminus: MIQTESRLEVADNTGAREVMCIKVLGGSKRRYAGIGDVIKVTVKVAAPRGRVKKGEIYNAVVVRTAKGVRRQDGSLVKFDGNAAVLLNAKLEPIGTRIFGPVTRELRTERFMKIVSLAPEVL.

The protein belongs to the universal ribosomal protein uL14 family. As to quaternary structure, part of the 50S ribosomal subunit. Forms a cluster with proteins L3 and L19. In the 70S ribosome, L14 and L19 interact and together make contacts with the 16S rRNA in bridges B5 and B8.

Its function is as follows. Binds to 23S rRNA. Forms part of two intersubunit bridges in the 70S ribosome. The sequence is that of Large ribosomal subunit protein uL14 from Janthinobacterium sp. (strain Marseille) (Minibacterium massiliensis).